Reading from the N-terminus, the 278-residue chain is Orotidine 5'-phosphate decarboxylase (278 aa).

The active-site Proton donor is Lys95.

It belongs to the OMP decarboxylase family. Type 2 subfamily.

It catalyses the reaction orotidine 5'-phosphate + H(+) = UMP + CO2. Its pathway is pyrimidine metabolism; UMP biosynthesis via de novo pathway; UMP from orotate: step 2/2. This Methylibium petroleiphilum (strain ATCC BAA-1232 / LMG 22953 / PM1) protein is Orotidine 5'-phosphate decarboxylase.